Consider the following 188-residue polypeptide: Putative manganese efflux pump MntP (188 aa).

A run of 6 helical transmembrane segments spans residues 3–23 (WLTI…VALA), 39–59 (LGFH…LLGM), 65–85 (ISAY…GRMV), 104–124 (GMTM…VGLS), 125–145 (IAML…VAGV), and 167–187 (ICGG…HTLL).

The protein belongs to the MntP (TC 9.B.29) family.

The protein resides in the cell inner membrane. Its function is as follows. Probably functions as a manganese efflux pump. The protein is Putative manganese efflux pump MntP of Citrifermentans bemidjiense (strain ATCC BAA-1014 / DSM 16622 / JCM 12645 / Bem) (Geobacter bemidjiensis).